Here is a 719-residue protein sequence, read N- to C-terminus: Ribosomal RNA large subunit methyltransferase K/L (719 aa).

The THUMP domain maps to 43 to 154 (TQYRVLLWTR…REELVISLDL (112 aa)).

This sequence belongs to the methyltransferase superfamily. RlmKL family.

It is found in the cytoplasm. It catalyses the reaction guanosine(2445) in 23S rRNA + S-adenosyl-L-methionine = N(2)-methylguanosine(2445) in 23S rRNA + S-adenosyl-L-homocysteine + H(+). The catalysed reaction is guanosine(2069) in 23S rRNA + S-adenosyl-L-methionine = N(2)-methylguanosine(2069) in 23S rRNA + S-adenosyl-L-homocysteine + H(+). Functionally, specifically methylates the guanine in position 2445 (m2G2445) and the guanine in position 2069 (m7G2069) of 23S rRNA. This is Ribosomal RNA large subunit methyltransferase K/L from Pasteurella multocida (strain Pm70).